The sequence spans 312 residues: Malate dehydrogenase (312 aa).

Residues 12 to 17 (GAGFTG) and Asp-36 each bind NAD(+). Residues Arg-87 and Arg-93 each coordinate substrate. NAD(+)-binding positions include Asn-100 and 123-125 (LTN). Substrate is bound at residue Asn-125. Residue Ser-149 is modified to Phosphoserine. Arg-156 contributes to the substrate binding site. Residue His-180 is the Proton acceptor of the active site.

This sequence belongs to the LDH/MDH superfamily. MDH type 3 family.

It carries out the reaction (S)-malate + NAD(+) = oxaloacetate + NADH + H(+). Catalyzes the reversible oxidation of malate to oxaloacetate. The protein is Malate dehydrogenase of Bacillus cytotoxicus (strain DSM 22905 / CIP 110041 / 391-98 / NVH 391-98).